Here is a 403-residue protein sequence, read N- to C-terminus: Phosphoglycerate kinase (403 aa).

Residues 21-23, Arg36, 59-62, Arg119, and Arg154 contribute to the substrate site; these read DFN and HVGR. ATP contacts are provided by residues Lys207, Gly299, Glu330, and 357–360; that span reads GGDA.

It belongs to the phosphoglycerate kinase family. Monomer.

It localises to the cytoplasm. It catalyses the reaction (2R)-3-phosphoglycerate + ATP = (2R)-3-phospho-glyceroyl phosphate + ADP. The protein operates within carbohydrate degradation; glycolysis; pyruvate from D-glyceraldehyde 3-phosphate: step 2/5. This is Phosphoglycerate kinase (pgk) from Chlamydia trachomatis serovar D (strain ATCC VR-885 / DSM 19411 / UW-3/Cx).